Reading from the N-terminus, the 87-residue chain is Phosphoribosyl-ATP pyrophosphatase (87 aa).

Belongs to the PRA-PH family.

It is found in the cytoplasm. The catalysed reaction is 1-(5-phospho-beta-D-ribosyl)-ATP + H2O = 1-(5-phospho-beta-D-ribosyl)-5'-AMP + diphosphate + H(+). It participates in amino-acid biosynthesis; L-histidine biosynthesis; L-histidine from 5-phospho-alpha-D-ribose 1-diphosphate: step 2/9. The polypeptide is Phosphoribosyl-ATP pyrophosphatase (Clavibacter sepedonicus (Clavibacter michiganensis subsp. sepedonicus)).